The primary structure comprises 273 residues: Large ribosomal subunit protein uL2cz/uL2cy (273 aa).

Disordered regions lie at residues 1 to 22 and 225 to 273; these read MAKH…DRQV and PVDH…RRRK.

The protein belongs to the universal ribosomal protein uL2 family. As to quaternary structure, part of the 50S ribosomal subunit.

It is found in the plastid. Its subcellular location is the chloroplast. The sequence is that of Large ribosomal subunit protein uL2cz/uL2cy (rpl2-A) from Saccharum hybrid (Sugarcane).